A 419-amino-acid polypeptide reads, in one-letter code: Serine--tRNA ligase (419 aa).

Residue 226–228 coordinates L-serine; it reads TSE. Residues 257–259 and Val-273 each bind ATP; that span reads RRE. Position 280 (Glu-280) interacts with L-serine. 344–347 is an ATP binding site; the sequence is ELTS. Residue Thr-379 participates in L-serine binding.

The protein belongs to the class-II aminoacyl-tRNA synthetase family. Type-1 seryl-tRNA synthetase subfamily. In terms of assembly, homodimer. The tRNA molecule binds across the dimer.

Its subcellular location is the cytoplasm. It catalyses the reaction tRNA(Ser) + L-serine + ATP = L-seryl-tRNA(Ser) + AMP + diphosphate + H(+). The enzyme catalyses tRNA(Sec) + L-serine + ATP = L-seryl-tRNA(Sec) + AMP + diphosphate + H(+). The protein operates within aminoacyl-tRNA biosynthesis; selenocysteinyl-tRNA(Sec) biosynthesis; L-seryl-tRNA(Sec) from L-serine and tRNA(Sec): step 1/1. Its function is as follows. Catalyzes the attachment of serine to tRNA(Ser). Is also able to aminoacylate tRNA(Sec) with serine, to form the misacylated tRNA L-seryl-tRNA(Sec), which will be further converted into selenocysteinyl-tRNA(Sec). This is Serine--tRNA ligase from Mycobacterium tuberculosis (strain CDC 1551 / Oshkosh).